A 344-amino-acid chain; its full sequence is N-acetyl-gamma-glutamyl-phosphate reductase (344 aa).

The active site involves Cys148.

The protein belongs to the NAGSA dehydrogenase family. Type 1 subfamily.

It is found in the cytoplasm. The enzyme catalyses N-acetyl-L-glutamate 5-semialdehyde + phosphate + NADP(+) = N-acetyl-L-glutamyl 5-phosphate + NADPH + H(+). It functions in the pathway amino-acid biosynthesis; L-arginine biosynthesis; N(2)-acetyl-L-ornithine from L-glutamate: step 3/4. Catalyzes the NADPH-dependent reduction of N-acetyl-5-glutamyl phosphate to yield N-acetyl-L-glutamate 5-semialdehyde. The protein is N-acetyl-gamma-glutamyl-phosphate reductase of Clostridium botulinum (strain Eklund 17B / Type B).